Consider the following 123-residue polypeptide: Small ribosomal subunit protein eS8 (123 aa).

The tract at residues 1–37 is disordered; that stretch reads MKDQGRSTRKRTGGRLKHASNKKRHQLGREPAETTVG. Positions 7–26 are enriched in basic residues; the sequence is STRKRTGGRLKHASNKKRHQ.

The protein belongs to the eukaryotic ribosomal protein eS8 family. Part of the 30S ribosomal subunit.

The sequence is that of Small ribosomal subunit protein eS8 from Halorubrum lacusprofundi (strain ATCC 49239 / DSM 5036 / JCM 8891 / ACAM 34).